We begin with the raw amino-acid sequence, 291 residues long: F-box protein PP2-A12 (291 aa).

Residues K25 to K71 form the F-box domain.

The sequence is that of F-box protein PP2-A12 (P2A12) from Arabidopsis thaliana (Mouse-ear cress).